We begin with the raw amino-acid sequence, 528 residues long: Protein WHAT'S THIS FACTOR 1 homolog, chloroplastic (528 aa).

Residues 1–73 constitute a chloroplast transit peptide; that stretch reads MEPKLLLSAH…KTRVVVEPVR (73 aa). Residues 80–408 form the PORR domain; sequence KELTFDSVVQ…VKEKMRALVS (329 aa). A disordered region spans residues 410-528; it reads PRFPRRGGPR…FPDGTPREKW (119 aa). Residues 418–428 are compositionally biased toward basic and acidic residues; it reads PRKDEEGREVE. Residues 429 to 491 are compositionally biased toward acidic residues; sequence IDGSDADGEE…DDDDEDEEED (63 aa).

The protein localises to the plastid. The protein resides in the chloroplast. Its function is as follows. RNA-binding protein involved in group II intron splicing. Binds specific group II introns and promotes their splicing. Functions in the context of a heterodimer with the ribonuclease III domain-containing protein RNC1. This chain is Protein WHAT'S THIS FACTOR 1 homolog, chloroplastic, found in Arabidopsis thaliana (Mouse-ear cress).